We begin with the raw amino-acid sequence, 343 residues long: Zinc finger protein Gfi-1b (343 aa).

Residues 1–20 (MPRSFLVKSKKTHTYNQHRY) form a mediates repression of transcription region. The interval 1–20 (MPRSFLVKSKKTHTYNQHRY) is SNAG domain. The tract at residues 51–77 (STDPTEKQHTPENVITEEARSDPGDPR) is disordered. Basic and acidic residues predominate over residues 67-77 (EEARSDPGDPR). 6 C2H2-type zinc fingers span residues 176–199 (YHCV…RRSH), 205–227 (FVCN…LNVH), 233–255 (FECK…LLIH), 261–283 (YPCQ…TYIH), 289–311 (HKCQ…SRKH), and 317–340 (FSCD…ENQH).

It is found in the nucleus. Essential transcriptional regulator necessary for development and differentiation of erythroid and megakaryocytic lineages. Alters histone methylation by recruiting histone methyltransferase to target genes promoters. Plays a role in heterochromatin formation. In Xenopus laevis (African clawed frog), this protein is Zinc finger protein Gfi-1b (gfi1b).